The sequence spans 715 residues: Elongation factor G (715 aa).

Residues 12 to 309 form the tr-type G domain; the sequence is RRVRNIGIMA…GVIDYLPSPL (298 aa). Residues 21–28, 108–112, and 162–165 each bind GTP; these read AHIDAGKT, DTPGH, and NKMD.

This sequence belongs to the TRAFAC class translation factor GTPase superfamily. Classic translation factor GTPase family. EF-G/EF-2 subfamily.

The protein localises to the cytoplasm. Functionally, catalyzes the GTP-dependent ribosomal translocation step during translation elongation. During this step, the ribosome changes from the pre-translocational (PRE) to the post-translocational (POST) state as the newly formed A-site-bound peptidyl-tRNA and P-site-bound deacylated tRNA move to the P and E sites, respectively. Catalyzes the coordinated movement of the two tRNA molecules, the mRNA and conformational changes in the ribosome. In Rubrobacter xylanophilus (strain DSM 9941 / JCM 11954 / NBRC 16129 / PRD-1), this protein is Elongation factor G.